We begin with the raw amino-acid sequence, 823 residues long: DNA mismatch repair protein MutS (823 aa).

605 to 612 (GPNMSGKS) provides a ligand contact to ATP.

It belongs to the DNA mismatch repair MutS family.

Its function is as follows. This protein is involved in the repair of mismatches in DNA. It is possible that it carries out the mismatch recognition step. This protein has a weak ATPase activity. This Fervidobacterium nodosum (strain ATCC 35602 / DSM 5306 / Rt17-B1) protein is DNA mismatch repair protein MutS.